The primary structure comprises 204 residues: Recombination protein RecR (204 aa).

The C4-type zinc finger occupies 61–76 (CACCNTFSETQVCSTC). The region spanning 84-183 (SLLCIVETPA…KVTRIARGIP (100 aa)) is the Toprim domain.

The protein belongs to the RecR family.

In terms of biological role, may play a role in DNA repair. It seems to be involved in an RecBC-independent recombinational process of DNA repair. It may act with RecF and RecO. This Polynucleobacter necessarius subsp. necessarius (strain STIR1) protein is Recombination protein RecR.